The primary structure comprises 253 residues: Short chain dehydrogenase ple7 (253 aa).

A helical transmembrane segment spans residues 5-25 (IVIVTGASHGIGLATVNLLLA). 5 residues coordinate NADP(+): valine 8, arginine 116, tyrosine 148, lysine 152, and asparagine 184. Tyrosine 148 (proton acceptor) is an active-site residue. Catalysis depends on lysine 152, which acts as the Lowers pKa of active site Tyr. N-linked (GlcNAc...) asparagine glycosylation occurs at asparagine 187.

This sequence belongs to the short-chain dehydrogenases/reductases (SDR) family.

The protein resides in the membrane. Its pathway is secondary metabolite biosynthesis; terpenoid biosynthesis. In terms of biological role, short chain dehydrogenase; part of the gene cluster that mediates the biosynthesis of pleuromutilin, a tricyclic diterpene showing antibacterial properties. The geranylgeranyl diphosphate (GGPP) synthase ple4 catalyzes the first step in pleuromutilin biosynthesis. GGPP is then substrate of the premutilin synthase (PS) ple3 to yield premutilin. Premutilin synthase is a bifunctional enzyme composed of the fusion of a class II diterpene cyclase (DTC) and a class I diterpene synthase (DTS), with the corresponding domains and active sites containing characteristic aspartate-rich motifs. GGPP is first converted to mutildienyl-diphosphate (MPP) at the class II DTC site. MPP is subsequently further cyclized at the class I DTS site, followed by a 1,5-hydride shift and addition of water prior to terminating deprotonation, to yield premutilin. The cytochrome P450 monooxygenases ple5 and ple6 hydroxylate premutilin at C-11 and C-3, respectively, producing 11-hydroxypremutilin and 3-hydroxypremutilin. The combination of the actions of both ple5 and ple6 leads to the production of 3,11-dihydroxypremutilin. The short chain dehydrogenase ple7 further converts 3,11-dihydroxypremutilin into mutilin. The acetyltransferase ple2 then acetylates mutilin to produce 14-O-acetylmutilin. Finally, the cytochrome P450 monooxygenase ple1 catalyzes hydroxylation on the alpha position of the acetyl side chain of 14-O-acetylmutilin to yield pleuromutilin. The chain is Short chain dehydrogenase ple7 from Rhodocybe pseudopiperita (Clitopilus pseudopiperitus).